We begin with the raw amino-acid sequence, 269 residues long: Cytochrome c oxidase subunit 3 (269 aa).

At 1–22 (MTHLERSRHQQHPFHMVMPSPW) the chain is on the mitochondrial matrix side. Residues 23–41 (PIVVSFALLSLALSTALTM) form a helical membrane-spanning segment. Over 42 to 48 (HGYIGNM) the chain is Mitochondrial intermembrane. The chain crosses the membrane as a helical span at residues 49–73 (NMVYLALFVLLTSSILWFRDIVAEA). Over 74–80 (TYLGDHT) the chain is Mitochondrial matrix. Residues 81-114 (MAVRKGINLGFLMFVLSEVLIFAGLFWAYFHSAM) form a helical membrane-spanning segment. Topologically, residues 115–137 (SPDVTLGACWPPVGIEAVQPTEL) are mitochondrial intermembrane. The chain crosses the membrane as a helical span at residues 138–161 (PLLNTIILLSSGATVTYSHHALIA). Over 162–164 (GNR) the chain is Mitochondrial matrix. A helical membrane pass occupies residues 165 to 188 (NKALSGLLITFWLIVIFVTCQYIE). Residues 189 to 201 (YTNAAFTISDGVY) are Mitochondrial intermembrane-facing. The chain crosses the membrane as a helical span at residues 202-230 (GSVFYAGTGLHFLHMVMLAAMLGVNYWRM). At 231-248 (RNYHLTAGHHVGYETTII) the chain is on the mitochondrial matrix side. The helical transmembrane segment at 249 to 265 (YTHVLDVIWLFLYVVFY) threads the bilayer. Residues 266–269 (WWGV) lie on the Mitochondrial intermembrane side of the membrane.

The protein belongs to the cytochrome c oxidase subunit 3 family. Component of the cytochrome c oxidase (complex IV, CIV), a multisubunit enzyme composed of 12 subunits. The complex is composed of a catalytic core of 3 subunits COX1, COX2 and COX3, encoded in the mitochondrial DNA, and 9 supernumerary subunits COX4, COX5A (or COX5B), COX6, COX7, COX8, COX9, COX12, COX13 and COX26, which are encoded in the nuclear genome. The complex exists as a monomer or a dimer and forms supercomplexes (SCs) in the inner mitochondrial membrane with a dimer of ubiquinol-cytochrome c oxidoreductase (cytochrome b-c1 complex, complex III, CIII), resulting in 2 different assemblies (supercomplexes III(2)IV and III(2)IV(2)). In terms of processing, the N-terminus is blocked.

The protein localises to the mitochondrion inner membrane. It catalyses the reaction 4 Fe(II)-[cytochrome c] + O2 + 8 H(+)(in) = 4 Fe(III)-[cytochrome c] + 2 H2O + 4 H(+)(out). Component of the cytochrome c oxidase, the last enzyme in the mitochondrial electron transport chain which drives oxidative phosphorylation. The respiratory chain contains 3 multisubunit complexes succinate dehydrogenase (complex II, CII), ubiquinol-cytochrome c oxidoreductase (cytochrome b-c1 complex, complex III, CIII) and cytochrome c oxidase (complex IV, CIV), that cooperate to transfer electrons derived from NADH and succinate to molecular oxygen, creating an electrochemical gradient over the inner membrane that drives transmembrane transport and the ATP synthase. Cytochrome c oxidase is the component of the respiratory chain that catalyzes the reduction of oxygen to water. Electrons originating from reduced cytochrome c in the intermembrane space (IMS) are transferred via the dinuclear copper A center (CU(A)) of COX2 and heme A of COX1 to the active site in COX1, a binuclear center (BNC) formed by heme A3 and copper B (CU(B)). The BNC reduces molecular oxygen to 2 water molecules using 4 electrons from cytochrome c in the IMS and 4 protons from the mitochondrial matrix. COX3 is a catalytic core subunit. The protein is Cytochrome c oxidase subunit 3 (COX3) of Saccharomyces cerevisiae (strain ATCC 204508 / S288c) (Baker's yeast).